We begin with the raw amino-acid sequence, 156 residues long: Cyclic pyranopterin monophosphate synthase (156 aa).

Residues 73–75 and 110–111 each bind substrate; these read LCH and ME. Residue aspartate 125 is part of the active site.

It belongs to the MoaC family. In terms of assembly, homohexamer; trimer of dimers.

The catalysed reaction is (8S)-3',8-cyclo-7,8-dihydroguanosine 5'-triphosphate = cyclic pyranopterin phosphate + diphosphate. The protein operates within cofactor biosynthesis; molybdopterin biosynthesis. In terms of biological role, catalyzes the conversion of (8S)-3',8-cyclo-7,8-dihydroguanosine 5'-triphosphate to cyclic pyranopterin monophosphate (cPMP). The protein is Cyclic pyranopterin monophosphate synthase of Stutzerimonas stutzeri (strain A1501) (Pseudomonas stutzeri).